A 497-amino-acid chain; its full sequence is Glucose-6-phosphate 1-dehydrogenase (497 aa).

Residues Gly17–Lys24, Arg51, and Lys151 contribute to the NADP(+) site. D-glucose 6-phosphate contacts are provided by residues Lys151, His181–Lys185, Glu219, and Asp238. His243 acts as the Proton acceptor in catalysis. NADP(+) is bound at residue Lys334. Residues Lys337 and Arg342 each contribute to the D-glucose 6-phosphate site. The NADP(+) site is built by Lys343, Arg347, and Arg371. Gln373 provides a ligand contact to D-glucose 6-phosphate. Residues Tyr379–Lys381, Asp399–Ser401, Arg465, and Trp487 contribute to the NADP(+) site.

This sequence belongs to the glucose-6-phosphate dehydrogenase family.

Its subcellular location is the cytoplasm. The protein resides in the cytosol. It catalyses the reaction D-glucose 6-phosphate + NADP(+) = 6-phospho-D-glucono-1,5-lactone + NADPH + H(+). Its pathway is carbohydrate degradation; pentose phosphate pathway; D-ribulose 5-phosphate from D-glucose 6-phosphate (oxidative stage): step 1/3. Cytosolic glucose-6-phosphate dehydrogenase that catalyzes the first and rate-limiting step of the oxidative branch within the pentose phosphate pathway/shunt, an alternative route to glycolysis for the dissimilation of carbohydrates and a major source of reducing power and metabolic intermediates for fatty acid and nucleic acid biosynthetic processes. In Dictyostelium discoideum (Social amoeba), this protein is Glucose-6-phosphate 1-dehydrogenase (g6pd-1).